Reading from the N-terminus, the 609-residue chain is Glutamine--fructose-6-phosphate aminotransferase [isomerizing] (609 aa).

The active-site Nucleophile; for GATase activity is the C2. Residues 2–219 (CGIFGYLGNQ…SGEFAIVSQG (218 aa)) form the Glutamine amidotransferase type-2 domain. 2 SIS domains span residues 285–426 (LSDV…VHGA) and 458–599 (WAQP…IDCP). Catalysis depends on K604, which acts as the For Fru-6P isomerization activity.

In terms of assembly, homodimer.

The protein resides in the cytoplasm. It catalyses the reaction D-fructose 6-phosphate + L-glutamine = D-glucosamine 6-phosphate + L-glutamate. In terms of biological role, catalyzes the first step in hexosamine metabolism, converting fructose-6P into glucosamine-6P using glutamine as a nitrogen source. In Chlamydia pneumoniae (Chlamydophila pneumoniae), this protein is Glutamine--fructose-6-phosphate aminotransferase [isomerizing].